The sequence spans 470 residues: Glutamate--tRNA ligase (470 aa).

Positions 9 to 19 match the 'HIGH' region motif; the sequence is PSPTGFLHVGG. Positions 236 to 240 match the 'KMSKS' region motif; that stretch reads RLSKR. ATP is bound at residue Lys239.

This sequence belongs to the class-I aminoacyl-tRNA synthetase family. Glutamate--tRNA ligase type 1 subfamily. As to quaternary structure, monomer.

The protein resides in the cytoplasm. The catalysed reaction is tRNA(Glu) + L-glutamate + ATP = L-glutamyl-tRNA(Glu) + AMP + diphosphate. Functionally, catalyzes the attachment of glutamate to tRNA(Glu) in a two-step reaction: glutamate is first activated by ATP to form Glu-AMP and then transferred to the acceptor end of tRNA(Glu). The protein is Glutamate--tRNA ligase of Legionella pneumophila (strain Paris).